Reading from the N-terminus, the 236-residue chain is Phosphoribosylaminoimidazole-succinocarboxamide synthase (236 aa).

The protein belongs to the SAICAR synthetase family.

The enzyme catalyses 5-amino-1-(5-phospho-D-ribosyl)imidazole-4-carboxylate + L-aspartate + ATP = (2S)-2-[5-amino-1-(5-phospho-beta-D-ribosyl)imidazole-4-carboxamido]succinate + ADP + phosphate + 2 H(+). It functions in the pathway purine metabolism; IMP biosynthesis via de novo pathway; 5-amino-1-(5-phospho-D-ribosyl)imidazole-4-carboxamide from 5-amino-1-(5-phospho-D-ribosyl)imidazole-4-carboxylate: step 1/2. The protein is Phosphoribosylaminoimidazole-succinocarboxamide synthase of Pseudomonas paraeruginosa (strain DSM 24068 / PA7) (Pseudomonas aeruginosa (strain PA7)).